We begin with the raw amino-acid sequence, 638 residues long: uncharacterized protein (638 aa).

This is an uncharacterized protein from Bos taurus (Bovine).